Here is a 315-residue protein sequence, read N- to C-terminus: Protein FRA10AC1 homolog (315 aa).

Position 1 is an N-acetylmethionine (Met-1). Residues 1 to 28 (MHGHGGYDSDFSDDEQGGGSSKKRKKTV) form a disordered region. Phosphoserine occurs at positions 9 and 12. N6-acetyllysine is present on Lys-36. The span at 225-235 (KEIKSTKKKSK) shows a compositional bias: basic residues. Residues 225–308 (KEIKSTKKKS…EKSQEEEFDD (84 aa)) are disordered. 2 stretches are compositionally biased toward basic and acidic residues: residues 236–245 (TTPECDESPR) and 255–278 (EASK…NRNA). Phosphoserine occurs at positions 283 and 285.

As to quaternary structure, interacts with ESS2.

It localises to the nucleus. Functionally, may be involved in pre-mRNA splicing. This chain is Protein FRA10AC1 homolog (Fra10ac1), found in Mus musculus (Mouse).